Here is a 169-residue protein sequence, read N- to C-terminus: Putative glycine cleavage system H protein, mitochondrial (169 aa).

Residues 60–142 (VGTVGITSYA…EEEGWICKIK (83 aa)) form the Lipoyl-binding domain. Residue K101 is modified to N6-lipoyllysine. Residue S131 is modified to Phosphoserine.

This sequence belongs to the GcvH family. Component of the glycine decarboxylase complex (GDC), which is composed of four proteins: P, T, L and H. (R)-lipoate serves as cofactor.

The protein resides in the mitochondrion. The glycine cleavage system (glycine decarboxylase complex) catalyzes the degradation of glycine. The H protein shuttles the methylamine group of glycine from the P protein to the T protein. This Schizosaccharomyces pombe (strain 972 / ATCC 24843) (Fission yeast) protein is Putative glycine cleavage system H protein, mitochondrial (gcv3).